Here is an 890-residue protein sequence, read N- to C-terminus: Leucine--tRNA ligase (890 aa).

Positions 48 to 58 (PYPSGKLHMGH) match the 'HIGH' region motif. A 'KMSKS' region motif is present at residues 645–649 (KMSKS). Lys-648 lines the ATP pocket.

The protein belongs to the class-I aminoacyl-tRNA synthetase family.

Its subcellular location is the cytoplasm. The enzyme catalyses tRNA(Leu) + L-leucine + ATP = L-leucyl-tRNA(Leu) + AMP + diphosphate. The polypeptide is Leucine--tRNA ligase (Polynucleobacter necessarius subsp. necessarius (strain STIR1)).